Here is a 342-residue protein sequence, read N- to C-terminus: Tetraacyldisaccharide 4'-kinase (342 aa).

56–63 (TAGGAGKT) contributes to the ATP binding site.

This sequence belongs to the LpxK family.

The enzyme catalyses a lipid A disaccharide + ATP = a lipid IVA + ADP + H(+). It participates in glycolipid biosynthesis; lipid IV(A) biosynthesis; lipid IV(A) from (3R)-3-hydroxytetradecanoyl-[acyl-carrier-protein] and UDP-N-acetyl-alpha-D-glucosamine: step 6/6. In terms of biological role, transfers the gamma-phosphate of ATP to the 4'-position of a tetraacyldisaccharide 1-phosphate intermediate (termed DS-1-P) to form tetraacyldisaccharide 1,4'-bis-phosphate (lipid IVA). This chain is Tetraacyldisaccharide 4'-kinase, found in Parvibaculum lavamentivorans (strain DS-1 / DSM 13023 / NCIMB 13966).